A 346-amino-acid chain; its full sequence is Putative D-xylulose reductase (346 aa).

Positions 39, 64, and 150 each coordinate Zn(2+).

This sequence belongs to the zinc-containing alcohol dehydrogenase family. Requires Zn(2+) as cofactor.

It catalyses the reaction xylitol + NAD(+) = D-xylulose + NADH + H(+). The chain is Putative D-xylulose reductase from Rhizobium meliloti (strain 1021) (Ensifer meliloti).